The following is a 240-amino-acid chain: MGKRLISQNRGRGTPKYRSPSHKRKGAVKYRSYDEMEKDGKILGTVVDILHDPGRSAPVAKVRFANDEERLVLIPEGIQVGEEIECGISAEIKPGNVLPLGEIPEGIPVYNIETIPGDGGKLVRSGGCYAHVVSHDVGKTIVKLPSGFSKVLNPACRATVGVVAGGGRKEKPFVKAGKKHHSLSAKAIAWPKVRGVAMNAVDHPYGGGRHQHLGKPSSVSRHTSPGRKVGHIASRRTGRK.

A compositionally biased stretch (polar residues) spans 1–11 (MGKRLISQNRG). Disordered regions lie at residues 1 to 31 (MGKR…VKYR) and 206 to 240 (GGGR…TGRK). Composition is skewed to basic residues over residues 13–28 (GTPK…KGAV) and 224–240 (SPGR…TGRK).

The protein belongs to the universal ribosomal protein uL2 family. Part of the 50S ribosomal subunit. Forms a bridge to the 30S subunit in the 70S ribosome.

Functionally, one of the primary rRNA binding proteins. Required for association of the 30S and 50S subunits to form the 70S ribosome, for tRNA binding and peptide bond formation. It has been suggested to have peptidyltransferase activity; this is somewhat controversial. Makes several contacts with the 16S rRNA in the 70S ribosome. The protein is Large ribosomal subunit protein uL2 of Methanococcus maripaludis (strain C6 / ATCC BAA-1332).